We begin with the raw amino-acid sequence, 238 residues long: uncharacterized protein (238 aa).

Positions 219 to 238 (EESINNNVDDTDDIDNDNFI) are disordered. Positions 227–238 (DDTDDIDNDNFI) are enriched in acidic residues.

This is an uncharacterized protein from Buchnera aphidicola subsp. Acyrthosiphon pisum (strain APS) (Acyrthosiphon pisum symbiotic bacterium).